We begin with the raw amino-acid sequence, 278 residues long: S-formylglutathione hydrolase YeiG (278 aa).

Active-site charge relay system residues include Ser145, Asp223, and His256.

The protein belongs to the esterase D family.

The enzyme catalyses S-formylglutathione + H2O = formate + glutathione + H(+). In terms of biological role, serine hydrolase involved in the detoxification of formaldehyde. Hydrolyzes S-formylglutathione to glutathione and formate. In Escherichia coli (strain UTI89 / UPEC), this protein is S-formylglutathione hydrolase YeiG (yeiG).